We begin with the raw amino-acid sequence, 652 residues long: Na(+)/H(+) antiporter NhaA 3 (652 aa).

The na(+)/H(+) antiporter NhaA stretch occupies residues 1-428; it reads MTGEIPRGRR…GASLTTWLVF (428 aa). Helical transmembrane passes span 32–52, 78–98, 114–134, 142–162, 173–193, 200–220, 227–249, 306–326, 342–362, 376–396, and 411–431; these read ETGS…WVNL, LRFW…GLEV, MLPL…YLAF, VGWG…LAVL, FLLT…AIAY, MALF…AAGV, LLLG…VVGL, HPWA…GVVV, GVLF…SMLV, WAAI…ALLI, and VGIL…FRLA. The region spanning 429-623 is the Thioredoxin domain; it reads RLAARLAPAR…LSAAVMSAFA (195 aa). A disordered region spans residues 626–652; sequence RLRPEGGREPDHRSEAGSEQPDEEPGT. The segment covering 627 to 641 has biased composition (basic and acidic residues); that stretch reads LRPEGGREPDHRSEA.

The protein in the N-terminal section; belongs to the NhaA Na(+)/H(+) (TC 2.A.33) antiporter family.

The protein resides in the cell membrane. It catalyses the reaction Na(+)(in) + 2 H(+)(out) = Na(+)(out) + 2 H(+)(in). In terms of biological role, na(+)/H(+) antiporter that extrudes sodium in exchange for external protons. This Salinispora tropica (strain ATCC BAA-916 / DSM 44818 / JCM 13857 / NBRC 105044 / CNB-440) protein is Na(+)/H(+) antiporter NhaA 3.